The primary structure comprises 96 residues: Redox-responsive transcriptional regulator WhiB3 (96 aa).

One can recognise a 4Fe-4S Wbl-type domain in the interval 22–86 (LCRGVDSSMF…GGLSESEREL (65 aa)). [4Fe-4S] cluster-binding residues include Cys-23, Cys-53, Cys-56, and Cys-62.

Belongs to the WhiB family. [4Fe-4S] cluster serves as cofactor. Post-translationally, the Fe-S cluster can be nitrosylated by nitric oxide (NO). Upon Fe-S cluster removal intramolecular disulfide bonds are formed.

It localises to the cytoplasm. In terms of biological role, a redox-sensitive transcriptional regulator. Maintains intracellular redox homeostasis by regulating catabolic metabolism and polyketide biosynthesis. Regulates expression of the redox buffer ergothioneine (ERG). In concert with myothiol (MSH), another redox buffer, responds to low pH leading to acid resistance. The apo- but not holo-form probably binds DNA. The polypeptide is Redox-responsive transcriptional regulator WhiB3 (whiB3) (Mycolicibacterium smegmatis (strain ATCC 700084 / mc(2)155) (Mycobacterium smegmatis)).